Reading from the N-terminus, the 105-residue chain is Insulin (105 aa).

Residues 1-24 (MALWTRLRPLLALLALWPPPPARA) form the signal peptide. Cystine bridges form between cysteine 31/cysteine 91, cysteine 43/cysteine 104, and cysteine 90/cysteine 95. A propeptide spans 57–82 (EVEGPQVGALELAGGPGAGGLEGPPQ) (c peptide).

It belongs to the insulin family. As to quaternary structure, heterodimer of a B chain and an A chain linked by two disulfide bonds.

The protein resides in the secreted. Functionally, insulin decreases blood glucose concentration. It increases cell permeability to monosaccharides, amino acids and fatty acids. It accelerates glycolysis, the pentose phosphate cycle, and glycogen synthesis in liver. This Bos taurus (Bovine) protein is Insulin (INS).